Consider the following 55-residue polypeptide: Antiviral protein GAP-31 (55 aa).

The interval 29-55 (KPEGNSHGIPSLRKSSDDPGSSFVVAG) is disordered.

Belongs to the ribosome-inactivating protein family. Type 1 RIP subfamily.

It catalyses the reaction Endohydrolysis of the N-glycosidic bond at one specific adenosine on the 28S rRNA.. Its function is as follows. Single-chain ribosome-inactivating protein, possessing high antiviral potency and low toxicity to normal cells in culture and to intact animals. Capable of inhibiting HIV-1 infection and replication. In Suregada multiflora (False lime), this protein is Antiviral protein GAP-31.